A 370-amino-acid polypeptide reads, in one-letter code: ATP synthase gamma chain, chloroplastic (370 aa).

The transit peptide at 1 to 54 directs the protein to the chloroplast; sequence MRSFCIAALLAVASAFTTQPTSFTVKTANVGERASGVFPEQSSAHRTRKATIVM. Cys-145 is a catalytic residue.

Belongs to the ATPase gamma chain family. As to quaternary structure, F-type ATPases have 2 components, CF(1) - the catalytic core - and CF(0) - the membrane proton channel. CF(1) has five subunits: alpha(3), beta(3), gamma(1), delta(1), epsilon(1). CF(0) has four main subunits: a, b, b' and c.

The protein resides in the plastid. It localises to the chloroplast thylakoid membrane. In terms of biological role, produces ATP from ADP in the presence of a proton gradient across the membrane. The gamma chain is believed to be important in regulating ATPase activity and the flow of protons through the CF(0) complex. The sequence is that of ATP synthase gamma chain, chloroplastic (ATPC) from Phaeodactylum tricornutum (Diatom).